The sequence spans 309 residues: DnaJ protein ERDJ7 (309 aa).

The signal sequence occupies residues 1–36 (MSQVGSAGEGSNSMAAAPPPRLLLLVVLLLVPVSNA). At 37 to 130 (IYCEEDDCYD…YRAYYGHKTD (94 aa)) the chain is on the lumenal side. The 65-residue stretch at 43-107 (DCYDLLGVKQ…STRGQYDYAI (65 aa)) folds into the J domain. Asn55 carries an N-linked (GlcNAc...) asparagine glycan. The chain crosses the membrane as a helical span at residues 131–151 (PRAVLIGLLLIISAFQYLNQF). Residues 152-219 (GRYSKAIETV…GVEKPSLWRL (68 aa)) are Cytoplasmic-facing. The chain crosses the membrane as a helical span at residues 220 to 242 (YGVQFILLPYSIGKVLSWKFCWF). Topologically, residues 243–309 (WRYRIKKLPY…EMRKESKRRR (67 aa)) are lumenal.

Its subcellular location is the endoplasmic reticulum membrane. In terms of biological role, may play a role in protein folding in the endoplasmic reticulum. The sequence is that of DnaJ protein ERDJ7 from Oryza sativa subsp. japonica (Rice).